We begin with the raw amino-acid sequence, 122 residues long: Small ribosomal subunit protein uS13 (122 aa).

The interval 94 to 122 (GLPVRGQVTQKNARTRKGPRKTVAGKKGK) is disordered. Over residues 106–122 (ARTRKGPRKTVAGKKGK) the composition is skewed to basic residues.

Belongs to the universal ribosomal protein uS13 family. As to quaternary structure, part of the 30S ribosomal subunit. Forms a loose heterodimer with protein S19. Forms two bridges to the 50S subunit in the 70S ribosome.

Its function is as follows. Located at the top of the head of the 30S subunit, it contacts several helices of the 16S rRNA. In the 70S ribosome it contacts the 23S rRNA (bridge B1a) and protein L5 of the 50S subunit (bridge B1b), connecting the 2 subunits; these bridges are implicated in subunit movement. Contacts the tRNAs in the A and P-sites. This chain is Small ribosomal subunit protein uS13, found in Mycoplasma mobile (strain ATCC 43663 / 163K / NCTC 11711) (Mesomycoplasma mobile).